A 403-amino-acid polypeptide reads, in one-letter code: Formate-dependent phosphoribosylglycinamide formyltransferase (403 aa).

N(1)-(5-phospho-beta-D-ribosyl)glycinamide is bound by residues 27–28 (EL) and E87. Residues R120, K161, 166-171 (SSGKGQ), 201-204 (EGFV), and E209 each bind ATP. The 195-residue stretch at 125–319 (RLAAEELGLP…EFELHARAIL (195 aa)) folds into the ATP-grasp domain. Positions 278 and 290 each coordinate Mg(2+). N(1)-(5-phospho-beta-D-ribosyl)glycinamide is bound by residues D297, K366, and 373–374 (RR). The segment at 382–403 (GPDVETARSRAREAASRVEPVA) is disordered. A compositionally biased stretch (basic and acidic residues) spans 386 to 397 (ETARSRAREAAS).

Belongs to the PurK/PurT family. Homodimer.

The catalysed reaction is N(1)-(5-phospho-beta-D-ribosyl)glycinamide + formate + ATP = N(2)-formyl-N(1)-(5-phospho-beta-D-ribosyl)glycinamide + ADP + phosphate + H(+). Its pathway is purine metabolism; IMP biosynthesis via de novo pathway; N(2)-formyl-N(1)-(5-phospho-D-ribosyl)glycinamide from N(1)-(5-phospho-D-ribosyl)glycinamide (formate route): step 1/1. Functionally, involved in the de novo purine biosynthesis. Catalyzes the transfer of formate to 5-phospho-ribosyl-glycinamide (GAR), producing 5-phospho-ribosyl-N-formylglycinamide (FGAR). Formate is provided by PurU via hydrolysis of 10-formyl-tetrahydrofolate. This is Formate-dependent phosphoribosylglycinamide formyltransferase from Rhodococcus jostii (strain RHA1).